We begin with the raw amino-acid sequence, 343 residues long: KRR1 small subunit processome component homolog (343 aa).

The region spanning 126-194 (DIIKIGNLVH…VRDIVLETMN (69 aa)) is the KH domain. The span at 230–246 (KNKNISKRKQPKNKKPK) shows a compositional bias: basic residues. The interval 230–343 (KNKNISKRKQ…LMKANKKNRS (114 aa)) is disordered. Basic and acidic residues-rich tracts occupy residues 272–303 (LNKE…RNKD) and 318–331 (RPAE…DALK). Residues 272–341 (LNKEQKQAKK…AKLMKANKKN (70 aa)) adopt a coiled-coil conformation. Over residues 333 to 343 (KLMKANKKNRS) the composition is skewed to basic residues.

It belongs to the KRR1 family. As to quaternary structure, monomer. Component of the ribosomal small subunit (SSU) processome.

It localises to the nucleus. It is found in the nucleolus. Required for 40S ribosome biogenesis. Involved in nucleolar processing of pre-18S ribosomal RNA and ribosome assembly. Binds to RNA. Required for female germline development, cell viability during eye development and for survival of dividing cells and epithelial cells during early wing disk development. The polypeptide is KRR1 small subunit processome component homolog (Drosophila virilis (Fruit fly)).